We begin with the raw amino-acid sequence, 563 residues long: Inclusion body clearance protein IML2 (563 aa).

This sequence belongs to the IML2 family. As to quaternary structure, interacts with lipid droplet proteins.

The protein localises to the cytoplasm. It localises to the nucleus. In terms of biological role, inclusion body (IB) resident protein that interacts strongly with lipid droplet (LD) proteins. Involved in LD-mediated IB clearing after protein folding stress, probably by enabling access to the IBs of an LD-stored soluble sterol derivative that acts as a chaperone in inclusion clearing. The sequence is that of Inclusion body clearance protein IML2 from Schizosaccharomyces pombe (strain 972 / ATCC 24843) (Fission yeast).